A 66-amino-acid polypeptide reads, in one-letter code: DNA-directed RNA polymerase subunit Rpo10 (66 aa).

Zn(2+) contacts are provided by Cys7, Cys10, Cys47, and Cys48.

It belongs to the archaeal Rpo10/eukaryotic RPB10 RNA polymerase subunit family. As to quaternary structure, part of the RNA polymerase complex. The cofactor is Zn(2+).

Its subcellular location is the cytoplasm. It catalyses the reaction RNA(n) + a ribonucleoside 5'-triphosphate = RNA(n+1) + diphosphate. In terms of biological role, DNA-dependent RNA polymerase (RNAP) catalyzes the transcription of DNA into RNA using the four ribonucleoside triphosphates as substrates. This is DNA-directed RNA polymerase subunit Rpo10 from Halobacterium salinarum (strain ATCC 29341 / DSM 671 / R1).